Consider the following 168-residue polypeptide: Protein-export protein SecB (168 aa).

Positions 1 to 20 (MTDETAANGENEAGRQSQSS) are disordered.

The protein belongs to the SecB family. Homotetramer, a dimer of dimers. One homotetramer interacts with 1 SecA dimer.

The protein resides in the cytoplasm. Functionally, one of the proteins required for the normal export of preproteins out of the cell cytoplasm. It is a molecular chaperone that binds to a subset of precursor proteins, maintaining them in a translocation-competent state. It also specifically binds to its receptor SecA. In Rhodospirillum centenum (strain ATCC 51521 / SW), this protein is Protein-export protein SecB.